A 347-amino-acid chain; its full sequence is D-alanine--D-alanine ligase (347 aa).

Residues 134 to 332 (KLYAKDLGIK…LAQSLPKTPK (199 aa)) form the ATP-grasp domain. 161 to 216 (LINFNFPFIIKPNSAGSSLGVSVVKEEKELNYALDSAFEYSKEVLIEPFIQGVKEY) contributes to the ATP binding site. Residues D288, E300, and N302 each contribute to the Mg(2+) site.

Belongs to the D-alanine--D-alanine ligase family. The cofactor is Mg(2+). Mn(2+) is required as a cofactor.

The protein localises to the cytoplasm. It catalyses the reaction 2 D-alanine + ATP = D-alanyl-D-alanine + ADP + phosphate + H(+). It participates in cell wall biogenesis; peptidoglycan biosynthesis. Cell wall formation. In Helicobacter pylori (strain HPAG1), this protein is D-alanine--D-alanine ligase.